The sequence spans 105 residues: UPF0235 protein CT1832 (105 aa).

The protein belongs to the UPF0235 family.

This is UPF0235 protein CT1832 from Chlorobaculum tepidum (strain ATCC 49652 / DSM 12025 / NBRC 103806 / TLS) (Chlorobium tepidum).